The following is a 320-amino-acid chain: Cytochrome f (320 aa).

The first 35 residues, 1–35 (MENRNTFSWVKEQMTRSISVSIMIYVITRTSISNA), serve as a signal peptide directing secretion. Heme contacts are provided by Y36, C56, C59, and H60. The helical transmembrane segment at 286–306 (VQGLLFFFASVILAQVFLVLK) threads the bilayer.

This sequence belongs to the cytochrome f family. As to quaternary structure, the 4 large subunits of the cytochrome b6-f complex are cytochrome b6, subunit IV (17 kDa polypeptide, petD), cytochrome f and the Rieske protein, while the 4 small subunits are PetG, PetL, PetM and PetN. The complex functions as a dimer. Heme is required as a cofactor.

It is found in the plastid. The protein resides in the chloroplast thylakoid membrane. Functionally, component of the cytochrome b6-f complex, which mediates electron transfer between photosystem II (PSII) and photosystem I (PSI), cyclic electron flow around PSI, and state transitions. The chain is Cytochrome f from Oryza nivara (Indian wild rice).